The primary structure comprises 171 residues: MPMKGRFPIRRTLQYLGSGDVVFKESVKVMTVNYNTHGELGEGARKFVFFNIPQIQYKNPWVQIMLFKNMTPSPFLRFYLESGEQVLVDVETKSNTEIVEHIKKILGKKEETLREEELEKQQRFHPGNFGPRKYCLRECMCEVEGQVPCPGLVPLPKEMTGKYKAALKANT.

The protein belongs to the mitochondrion-specific ribosomal protein mS25 family. In terms of assembly, component of the mitochondrial ribosome small subunit (28S) which comprises a 12S rRNA and about 30 distinct proteins.

It is found in the mitochondrion. This chain is Small ribosomal subunit protein mS25 (Mrps25), found in Rattus norvegicus (Rat).